The chain runs to 545 residues: T-complex protein 1 subunit alpha (545 aa).

This sequence belongs to the TCP-1 chaperonin family. As to quaternary structure, heterooligomeric complex of about 850 to 900 kDa that forms two stacked rings, 12 to 16 nm in diameter.

The protein localises to the cytoplasm. In terms of biological role, molecular chaperone; assists the folding of proteins upon ATP hydrolysis. Known to play a role, in vitro, in the folding of actin and tubulin. The chain is T-complex protein 1 subunit alpha (TCP-1A) from Schistosoma mansoni (Blood fluke).